The sequence spans 156 residues: Ribosomal RNA large subunit methyltransferase H (156 aa).

S-adenosyl-L-methionine contacts are provided by residues L73, G104, and 123-128; that span reads IGPLTL.

Belongs to the RNA methyltransferase RlmH family. Homodimer.

Its subcellular location is the cytoplasm. The catalysed reaction is pseudouridine(1915) in 23S rRNA + S-adenosyl-L-methionine = N(3)-methylpseudouridine(1915) in 23S rRNA + S-adenosyl-L-homocysteine + H(+). Specifically methylates the pseudouridine at position 1915 (m3Psi1915) in 23S rRNA. This is Ribosomal RNA large subunit methyltransferase H from Xanthomonas campestris pv. campestris (strain 8004).